The chain runs to 275 residues: Release factor glutamine methyltransferase (275 aa).

Residues Gly-114–Gly-118, Asp-137, Trp-165, and Asn-180 each bind S-adenosyl-L-methionine. Asn-180 to Tyr-183 is a substrate binding site.

This sequence belongs to the protein N5-glutamine methyltransferase family. PrmC subfamily.

The catalysed reaction is L-glutaminyl-[peptide chain release factor] + S-adenosyl-L-methionine = N(5)-methyl-L-glutaminyl-[peptide chain release factor] + S-adenosyl-L-homocysteine + H(+). Its function is as follows. Methylates the class 1 translation termination release factors RF1/PrfA and RF2/PrfB on the glutamine residue of the universally conserved GGQ motif. The sequence is that of Release factor glutamine methyltransferase from Xylella fastidiosa (strain Temecula1 / ATCC 700964).